The chain runs to 74 residues: Delta-actitoxin-Amc3a (74 aa).

The signal sequence occupies residues 1-19 (MNRLIILVVAAVFLGMASA). A propeptide spanning residues 20-24 (EEDVL) is cleaved from the precursor. Pro-29 carries the hydroxyproline modification. 3 disulfides stabilise this stretch: Cys-30-Cys-70, Cys-32-Cys-60, and Cys-53-Cys-71. Gln-73 is subject to Glutamine amide.

Belongs to the sea anemone sodium channel inhibitory toxin family. Type I subfamily.

It localises to the secreted. The protein resides in the nematocyst. Its function is as follows. Inhibits voltage-gated sodium channels (Nav). The polypeptide is Delta-actitoxin-Amc3a (Antheopsis maculata (Sea anemone)).